Consider the following 397-residue polypeptide: Elongation factor Tu (397 aa).

The 198-residue stretch at 10-207 (KPHVNVGTIG…TLDTYIPEPV (198 aa)) folds into the tr-type G domain. The tract at residues 19–26 (GHVDHGKT) is G1. 19–26 (GHVDHGKT) lines the GTP pocket. T26 lines the Mg(2+) pocket. The tract at residues 60 to 64 (GITIN) is G2. Positions 81–84 (DCPG) are G3. GTP-binding positions include 81 to 85 (DCPGH) and 136 to 139 (NKAD). Residues 136 to 139 (NKAD) are G4. Residues 174–176 (SAL) are G5.

The protein belongs to the TRAFAC class translation factor GTPase superfamily. Classic translation factor GTPase family. EF-Tu/EF-1A subfamily. In terms of assembly, monomer.

It localises to the cytoplasm. The enzyme catalyses GTP + H2O = GDP + phosphate + H(+). Functionally, GTP hydrolase that promotes the GTP-dependent binding of aminoacyl-tRNA to the A-site of ribosomes during protein biosynthesis. The protein is Elongation factor Tu of Ectopseudomonas mendocina (strain ymp) (Pseudomonas mendocina).